Consider the following 150-residue polypeptide: D-aminoacyl-tRNA deacylase (150 aa).

The short motif at 138 to 139 is the Gly-cisPro motif, important for rejection of L-amino acids element; it reads GP.

It belongs to the DTD family. As to quaternary structure, homodimer.

Its subcellular location is the cytoplasm. The catalysed reaction is glycyl-tRNA(Ala) + H2O = tRNA(Ala) + glycine + H(+). It carries out the reaction a D-aminoacyl-tRNA + H2O = a tRNA + a D-alpha-amino acid + H(+). An aminoacyl-tRNA editing enzyme that deacylates mischarged D-aminoacyl-tRNAs. Also deacylates mischarged glycyl-tRNA(Ala), protecting cells against glycine mischarging by AlaRS. Acts via tRNA-based rather than protein-based catalysis; rejects L-amino acids rather than detecting D-amino acids in the active site. By recycling D-aminoacyl-tRNA to D-amino acids and free tRNA molecules, this enzyme counteracts the toxicity associated with the formation of D-aminoacyl-tRNA entities in vivo and helps enforce protein L-homochirality. This chain is D-aminoacyl-tRNA deacylase, found in Petrotoga mobilis (strain DSM 10674 / SJ95).